Reading from the N-terminus, the 93-residue chain is Ferredoxin-2 (93 aa).

One can recognise a 2Fe-2S ferredoxin-type domain in the interval 2–91 (YKVTLKTPDG…DVVIETHKED (90 aa)). C37, C42, C45, and C75 together coordinate [2Fe-2S] cluster.

This sequence belongs to the 2Fe2S plant-type ferredoxin family. [2Fe-2S] cluster is required as a cofactor.

Its subcellular location is the plastid. The protein resides in the chloroplast. In terms of biological role, ferredoxins are iron-sulfur proteins that transfer electrons in a wide variety of metabolic reactions. The protein is Ferredoxin-2 of Equisetum telmateia (Great horsetail).